The sequence spans 180 residues: Large ribosomal subunit protein uL16 (180 aa).

It belongs to the universal ribosomal protein uL16 family.

This Thermococcus sibiricus (strain DSM 12597 / MM 739) protein is Large ribosomal subunit protein uL16.